A 200-amino-acid chain; its full sequence is Shikimate kinase (200 aa).

Gly-41–Ser-46 is a binding site for ATP. Ser-45 contacts Mg(2+). Positions 63, 87, and 109 each coordinate substrate. Arg-147 provides a ligand contact to ATP. Arg-166 is a substrate binding site.

Belongs to the shikimate kinase family. As to quaternary structure, monomer. It depends on Mg(2+) as a cofactor.

It is found in the cytoplasm. The enzyme catalyses shikimate + ATP = 3-phosphoshikimate + ADP + H(+). The protein operates within metabolic intermediate biosynthesis; chorismate biosynthesis; chorismate from D-erythrose 4-phosphate and phosphoenolpyruvate: step 5/7. In terms of biological role, catalyzes the specific phosphorylation of the 3-hydroxyl group of shikimic acid using ATP as a cosubstrate. The chain is Shikimate kinase from Caulobacter vibrioides (strain NA1000 / CB15N) (Caulobacter crescentus).